A 174-amino-acid polypeptide reads, in one-letter code: Repair DNA polymerase X (174 aa).

An involved in ssDNA binding region spans residues 42–51 (REEKMLNDVD). Positions 49 and 51 each coordinate Mg(2+). Cysteine 81 and cysteine 86 form a disulfide bridge. Aspartate 100 provides a ligand contact to Mg(2+).

Belongs to the DNA polymerase type-X family. Mg(2+) serves as cofactor.

It localises to the virion. The enzyme catalyses DNA(n) + a 2'-deoxyribonucleoside 5'-triphosphate = DNA(n+1) + diphosphate. Functionally, error-prone polymerase lacking a proofreading 3'-5' exonuclease which catalyzes the gap-filling reaction during the DNA repair process. Specifically binds intermediates in the single-nucleotide base-excision repair process. Also catalyzes DNA polymerization with low nucleotide-insertion fidelity. Probably acts as a strategic DNA mutase, which gives rise to a rapid emergence of variants. Generates mismatched G-G pairs, in that case, the polymerase first binds the deoxynucleotide followed by mismatch formation. Together with the viral DNA ligase, fills the single nucleotide gaps generated by the AP endonuclease. Binds DNA with high affinity via the helix alphaE. The chain is Repair DNA polymerase X from African swine fever virus (isolate Tick/South Africa/Pretoriuskop Pr4/1996) (ASFV).